The primary structure comprises 159 residues: Phosphopantetheine adenylyltransferase (159 aa).

Residue Thr10 participates in substrate binding. ATP-binding positions include 10–11 (TF) and His18. 3 residues coordinate substrate: Lys42, Met74, and Arg88. Residues 89–91 (GLR), Glu99, and 124–130 (WSFISSS) contribute to the ATP site.

The protein belongs to the bacterial CoaD family. As to quaternary structure, homohexamer. Requires Mg(2+) as cofactor.

It is found in the cytoplasm. The catalysed reaction is (R)-4'-phosphopantetheine + ATP + H(+) = 3'-dephospho-CoA + diphosphate. It participates in cofactor biosynthesis; coenzyme A biosynthesis; CoA from (R)-pantothenate: step 4/5. Its function is as follows. Reversibly transfers an adenylyl group from ATP to 4'-phosphopantetheine, yielding dephospho-CoA (dPCoA) and pyrophosphate. The chain is Phosphopantetheine adenylyltransferase from Escherichia coli (strain SMS-3-5 / SECEC).